A 303-amino-acid polypeptide reads, in one-letter code: Succinate--CoA ligase [ADP-forming] subunit alpha (303 aa).

Residues threonine 20–glutamate 23, lysine 46, and isoleucine 108–glutamate 110 each bind CoA. Tyrosine 173 serves as a coordination point for substrate. Catalysis depends on histidine 259, which acts as the Tele-phosphohistidine intermediate.

Belongs to the succinate/malate CoA ligase alpha subunit family. As to quaternary structure, heterotetramer of two alpha and two beta subunits.

The enzyme catalyses succinate + ATP + CoA = succinyl-CoA + ADP + phosphate. It carries out the reaction GTP + succinate + CoA = succinyl-CoA + GDP + phosphate. Its pathway is carbohydrate metabolism; tricarboxylic acid cycle; succinate from succinyl-CoA (ligase route): step 1/1. Its function is as follows. Succinyl-CoA synthetase functions in the citric acid cycle (TCA), coupling the hydrolysis of succinyl-CoA to the synthesis of either ATP or GTP and thus represents the only step of substrate-level phosphorylation in the TCA. The alpha subunit of the enzyme binds the substrates coenzyme A and phosphate, while succinate binding and nucleotide specificity is provided by the beta subunit. The protein is Succinate--CoA ligase [ADP-forming] subunit alpha of Mycobacterium bovis (strain ATCC BAA-935 / AF2122/97).